A 155-amino-acid chain; its full sequence is SsrA-binding protein (155 aa).

This sequence belongs to the SmpB family.

It is found in the cytoplasm. Its function is as follows. Required for rescue of stalled ribosomes mediated by trans-translation. Binds to transfer-messenger RNA (tmRNA), required for stable association of tmRNA with ribosomes. tmRNA and SmpB together mimic tRNA shape, replacing the anticodon stem-loop with SmpB. tmRNA is encoded by the ssrA gene; the 2 termini fold to resemble tRNA(Ala) and it encodes a 'tag peptide', a short internal open reading frame. During trans-translation Ala-aminoacylated tmRNA acts like a tRNA, entering the A-site of stalled ribosomes, displacing the stalled mRNA. The ribosome then switches to translate the ORF on the tmRNA; the nascent peptide is terminated with the 'tag peptide' encoded by the tmRNA and targeted for degradation. The ribosome is freed to recommence translation, which seems to be the essential function of trans-translation. In Clostridium acetobutylicum (strain ATCC 824 / DSM 792 / JCM 1419 / IAM 19013 / LMG 5710 / NBRC 13948 / NRRL B-527 / VKM B-1787 / 2291 / W), this protein is SsrA-binding protein.